We begin with the raw amino-acid sequence, 176 residues long: NAD(P)H-quinone oxidoreductase subunit 6, chloroplastic (176 aa).

5 helical membrane passes run 10-30 (ILLVFLGSGLILGGLGVVLFT), 32-52 (PIYSAFSLGLVFVCISLFYIP), 61-81 (AQLLIYVGAVNVLIVFAVMFM), 90-112 (FHLWTVGDGITSLVCTSILFSLI), and 152-172 (FYLPFELTSIILLVALIGAIA).

The protein belongs to the complex I subunit 6 family. As to quaternary structure, NDH is composed of at least 16 different subunits, 5 of which are encoded in the nucleus.

Its subcellular location is the plastid. It localises to the chloroplast thylakoid membrane. It catalyses the reaction a plastoquinone + NADH + (n+1) H(+)(in) = a plastoquinol + NAD(+) + n H(+)(out). The catalysed reaction is a plastoquinone + NADPH + (n+1) H(+)(in) = a plastoquinol + NADP(+) + n H(+)(out). NDH shuttles electrons from NAD(P)H:plastoquinone, via FMN and iron-sulfur (Fe-S) centers, to quinones in the photosynthetic chain and possibly in a chloroplast respiratory chain. The immediate electron acceptor for the enzyme in this species is believed to be plastoquinone. Couples the redox reaction to proton translocation, and thus conserves the redox energy in a proton gradient. This is NAD(P)H-quinone oxidoreductase subunit 6, chloroplastic (ndhG) from Ceratophyllum demersum (Rigid hornwort).